The following is a 193-amino-acid chain: Superoxide dismutase [Fe] (193 aa).

4 residues coordinate Fe cation: histidine 27, histidine 74, aspartate 157, and histidine 161.

It belongs to the iron/manganese superoxide dismutase family. Monomer. Requires Fe cation as cofactor.

It catalyses the reaction 2 superoxide + 2 H(+) = H2O2 + O2. Its function is as follows. Destroys superoxide anion radicals which are normally produced within the cells and which are toxic to biological systems. Involved in the metabolism of 4-aminophenol. May have an indirect role in hydroxyquinol metabolism by scavenging and detoxifying reactive species that promote its auto-oxidation. The polypeptide is Superoxide dismutase [Fe] (Burkholderia sp).